The following is a 597-amino-acid chain: MKNIRNFSIIAHIDHGKSTLSDRLIQTCGGLSDREMEAQVLDSMDLERERGITIKAQSVTLDYKAKDGETYQLNFIDTPGHVDFSYEVSRSLAACEGALLVVDAGQGVEAQTLANCYTAIEMNLEVVPVLNKIDLPAADPERVAEEIEDIVGIDAMEAVRCSAKTGLGIEEVLEEIVHKIPAPEGDPNAPLQALIIDSWFDNYLGVVSLVRVKNGMLKKGDKIKVMSTGQAYNVDRLGIFTPKQVDRTELTTGEVGWVVCAIKDILGAPVGDTLTHQHNPATAALPGFKKVKPQVYAGLFPVSSDDYEAFRDALGKLSLNDASLFYEPETSSALGFGFRCGFLGLLHMEIIQERLEREYDLDLITTAPTVVYEVELTNGEVVYVDSPSKLPPLNNIGDIREPIAECNMLVPQEYLGNVITLCVEKRGVQTNMVYHGNQIALTYDIPMGEVVLDFFDRLKSTSRGYASLDYSFKRFQSANMVRVDIMINGDRVDALALIVHKDNAVYRGRELVEKMKELIPRQQFDIAIQAAIGNQVIARSTVKQLRKNVLAKCYGGDVSRKKKLLQKQKEGKKRMKQLGNVEVPQEAFLAILHVGKD.

Residues Lys2–Glu184 form the tr-type G domain. GTP contacts are provided by residues Asp14–Thr19 and Asn131–Asp134.

This sequence belongs to the TRAFAC class translation factor GTPase superfamily. Classic translation factor GTPase family. LepA subfamily.

It is found in the cell inner membrane. It catalyses the reaction GTP + H2O = GDP + phosphate + H(+). Functionally, required for accurate and efficient protein synthesis under certain stress conditions. May act as a fidelity factor of the translation reaction, by catalyzing a one-codon backward translocation of tRNAs on improperly translocated ribosomes. Back-translocation proceeds from a post-translocation (POST) complex to a pre-translocation (PRE) complex, thus giving elongation factor G a second chance to translocate the tRNAs correctly. Binds to ribosomes in a GTP-dependent manner. In Actinobacillus succinogenes (strain ATCC 55618 / DSM 22257 / CCUG 43843 / 130Z), this protein is Elongation factor 4.